A 209-amino-acid polypeptide reads, in one-letter code: Uracil phosphoribosyltransferase (209 aa).

5-phospho-alpha-D-ribose 1-diphosphate is bound by residues Arg-79, Arg-104, and 131–139 (DPMLATGGS). Uracil contacts are provided by residues Ile-194 and 199–201 (GDA). Position 200 (Asp-200) interacts with 5-phospho-alpha-D-ribose 1-diphosphate.

It belongs to the UPRTase family. Requires Mg(2+) as cofactor.

The catalysed reaction is UMP + diphosphate = 5-phospho-alpha-D-ribose 1-diphosphate + uracil. It participates in pyrimidine metabolism; UMP biosynthesis via salvage pathway; UMP from uracil: step 1/1. Its activity is regulated as follows. Allosterically activated by GTP. Its function is as follows. Catalyzes the conversion of uracil and 5-phospho-alpha-D-ribose 1-diphosphate (PRPP) to UMP and diphosphate. The protein is Uracil phosphoribosyltransferase of Desulfitobacterium hafniense (strain DSM 10664 / DCB-2).